The chain runs to 183 residues: Inner membrane-spanning protein YciB (183 aa).

5 helical membrane-spanning segments follow: residues 22–42 (IYAATGVLIAATAIQLVITYL), 50–70 (MHLATFAMVTVFGSLTLFFHD), 72–92 (AFIKWKVSIVYALFAIGLIAS), 118–138 (VTWYWVGFFVLCSFANIYIAF), and 148–168 (FKVFGLTALTLINTVITVVYL).

This sequence belongs to the YciB family.

It localises to the cell inner membrane. Plays a role in cell envelope biogenesis, maintenance of cell envelope integrity and membrane homeostasis. This is Inner membrane-spanning protein YciB from Shewanella frigidimarina (strain NCIMB 400).